Consider the following 263-residue polypeptide: uncharacterized protein (263 aa).

One copy of the WD repeat lies at 53-89; sequence SAVTASKFSPDGRWLVNLTDQGYVQLWDVHKGERVKT.

This is an uncharacterized protein from Deinococcus radiodurans (strain ATCC 13939 / DSM 20539 / JCM 16871 / CCUG 27074 / LMG 4051 / NBRC 15346 / NCIMB 9279 / VKM B-1422 / R1).